Here is a 132-residue protein sequence, read N- to C-terminus: HLA class I histocompatibility antigen protein P5 (132 aa).

As to expression, expressed in lymphoid tissues; Detected in spleen as well as in B-cell lines, NK cell lines and activated lymphocytes.

The sequence is that of HLA class I histocompatibility antigen protein P5 (HCP5) from Homo sapiens (Human).